We begin with the raw amino-acid sequence, 408 residues long: Dual-specificity RNA methyltransferase RlmN (408 aa).

Glutamate 126 acts as the Proton acceptor in catalysis. Positions 132 to 373 (EEGRGTLCLS…NQAGYASPIR (242 aa)) constitute a Radical SAM core domain. Cysteine 139 and cysteine 384 are oxidised to a cystine. Cysteine 146, cysteine 150, and cysteine 153 together coordinate [4Fe-4S] cluster. Residues 210-211 (GE), serine 242, 264-266 (SLH), and asparagine 341 each bind S-adenosyl-L-methionine. Cysteine 384 functions as the S-methylcysteine intermediate in the catalytic mechanism.

It belongs to the radical SAM superfamily. RlmN family. The cofactor is [4Fe-4S] cluster.

The protein localises to the cytoplasm. The catalysed reaction is adenosine(2503) in 23S rRNA + 2 reduced [2Fe-2S]-[ferredoxin] + 2 S-adenosyl-L-methionine = 2-methyladenosine(2503) in 23S rRNA + 5'-deoxyadenosine + L-methionine + 2 oxidized [2Fe-2S]-[ferredoxin] + S-adenosyl-L-homocysteine. It carries out the reaction adenosine(37) in tRNA + 2 reduced [2Fe-2S]-[ferredoxin] + 2 S-adenosyl-L-methionine = 2-methyladenosine(37) in tRNA + 5'-deoxyadenosine + L-methionine + 2 oxidized [2Fe-2S]-[ferredoxin] + S-adenosyl-L-homocysteine. Its function is as follows. Specifically methylates position 2 of adenine 2503 in 23S rRNA and position 2 of adenine 37 in tRNAs. m2A2503 modification seems to play a crucial role in the proofreading step occurring at the peptidyl transferase center and thus would serve to optimize ribosomal fidelity. This chain is Dual-specificity RNA methyltransferase RlmN, found in Bartonella henselae (strain ATCC 49882 / DSM 28221 / CCUG 30454 / Houston 1) (Rochalimaea henselae).